The following is a 1341-amino-acid chain: DNA-directed RNA polymerase subunit Rpo1N (1341 aa).

Residues Cys-62, Cys-65, Cys-72, His-75, Cys-102, Cys-105, Cys-149, and Cys-152 each coordinate Zn(2+). Residues Asp-918, Asp-920, and Asp-922 each coordinate Mg(2+).

The protein belongs to the RNA polymerase beta' chain family. As to quaternary structure, part of the RNA polymerase complex. It depends on Mg(2+) as a cofactor. The cofactor is Zn(2+). Post-translationally, this protein undergoes a protein self splicing that involves a post-translational excision of the intervening region (intein) followed by peptide ligation.

It is found in the cytoplasm. The enzyme catalyses RNA(n) + a ribonucleoside 5'-triphosphate = RNA(n+1) + diphosphate. Functionally, DNA-dependent RNA polymerase (RNAP) catalyzes the transcription of DNA into RNA using the four ribonucleoside triphosphates as substrates. Forms the clamp head domain. In Methanocaldococcus jannaschii (strain ATCC 43067 / DSM 2661 / JAL-1 / JCM 10045 / NBRC 100440) (Methanococcus jannaschii), this protein is DNA-directed RNA polymerase subunit Rpo1N.